The sequence spans 327 residues: Alkene monooxygenase system, ferredoxin--NAD(+) reductase component (327 aa).

One can recognise a 2Fe-2S ferredoxin-type domain in the interval M1–D89. [2Fe-2S] cluster contacts are provided by C32, C37, C40, and C73. The FAD-binding FR-type domain maps to P96–R194.

Belongs to the bacterial ring-hydroxylating dioxygenase ferredoxin reductase family. In terms of assembly, monomer. The alkene monooxygenase multicomponent enzyme system is composed of an electron transfer component and a monooxygenase component interacting with the effector protein XamoD. The electron transfer component is composed of a ferredoxin reductase (XamoF) and a ferredoxin (XamoC), and the monooxygenase component is formed by a heterohexamer (dimer of heterotrimers) of two alpha subunits (XamoA), two beta subunits (XamoE) and two gamma subunits (XamoB). It depends on FAD as a cofactor. [2Fe-2S] cluster serves as cofactor.

Its subcellular location is the cytoplasm. It catalyses the reaction 2 reduced [2Fe-2S]-[ferredoxin] + NAD(+) + H(+) = 2 oxidized [2Fe-2S]-[ferredoxin] + NADH. Functionally, reductase component of the alkene monooxygenase multicomponent enzyme system which catalyzes the O2- and NADH-dependent epoxidation of short chain (C2 to C6) alkenes to their corresponding epoxides. Ferredoxin reductase catalyzes the transfer of electrons from NADH to ferredoxin (XamoC). NADPH is also effective but with a rate approximately 3-fold lower than with NADH. This chain is Alkene monooxygenase system, ferredoxin--NAD(+) reductase component, found in Xanthobacter autotrophicus (strain ATCC BAA-1158 / Py2).